The sequence spans 187 residues: Threonylcarbamoyl-AMP synthase (187 aa).

One can recognise a YrdC-like domain in the interval Thr-4 to Asp-187.

The protein belongs to the SUA5 family. TsaC subfamily.

The protein resides in the cytoplasm. The catalysed reaction is L-threonine + hydrogencarbonate + ATP = L-threonylcarbamoyladenylate + diphosphate + H2O. Its function is as follows. Required for the formation of a threonylcarbamoyl group on adenosine at position 37 (t(6)A37) in tRNAs that read codons beginning with adenine. Catalyzes the conversion of L-threonine, HCO(3)(-)/CO(2) and ATP to give threonylcarbamoyl-AMP (TC-AMP) as the acyladenylate intermediate, with the release of diphosphate. This Xanthomonas euvesicatoria pv. vesicatoria (strain 85-10) (Xanthomonas campestris pv. vesicatoria) protein is Threonylcarbamoyl-AMP synthase.